The following is a 410-amino-acid chain: uncharacterized protein (410 aa).

An N-terminal signal peptide occupies residues 1–41 (MVKSFRMKALIAGAAVAAAVSAGAVSDVPAAKVLQPTAAYA).

In terms of assembly, interacts with PcrA, Pdp, YclM, YkvL, YhcQ and YomL. The interaction with PcrA is not essential for cell viability or repair of UV-induced lesions.

It is found in the secreted. In terms of biological role, increases the processivity of the PcrA helicase, but does not bind to DNA. This is an uncharacterized protein from Bacillus subtilis (strain 168).